The primary structure comprises 307 residues: Fructokinase (307 aa).

Belongs to the carbohydrate kinase PfkB family.

It catalyses the reaction D-fructose + ATP = D-fructose 6-phosphate + ADP + H(+). In terms of biological role, involved in sucrose metabolism. The protein is Fructokinase (scrK) of Klebsiella pneumoniae.